The chain runs to 260 residues: Pyridoxine 5'-phosphate synthase (260 aa).

N15 is a binding site for 3-amino-2-oxopropyl phosphate. 17 to 18 contributes to the 1-deoxy-D-xylulose 5-phosphate binding site; the sequence is DH. R26 contributes to the 3-amino-2-oxopropyl phosphate binding site. The active-site Proton acceptor is H51. 1-deoxy-D-xylulose 5-phosphate-binding residues include R53 and H58. The Proton acceptor role is filled by E78. T108 contacts 1-deoxy-D-xylulose 5-phosphate. H199 serves as the catalytic Proton donor. Residues G200 and 221-222 contribute to the 3-amino-2-oxopropyl phosphate site; that span reads GH.

The protein belongs to the PNP synthase family. Homooctamer; tetramer of dimers.

It localises to the cytoplasm. It catalyses the reaction 3-amino-2-oxopropyl phosphate + 1-deoxy-D-xylulose 5-phosphate = pyridoxine 5'-phosphate + phosphate + 2 H2O + H(+). The protein operates within cofactor biosynthesis; pyridoxine 5'-phosphate biosynthesis; pyridoxine 5'-phosphate from D-erythrose 4-phosphate: step 5/5. Its function is as follows. Catalyzes the complicated ring closure reaction between the two acyclic compounds 1-deoxy-D-xylulose-5-phosphate (DXP) and 3-amino-2-oxopropyl phosphate (1-amino-acetone-3-phosphate or AAP) to form pyridoxine 5'-phosphate (PNP) and inorganic phosphate. This Cupriavidus taiwanensis (strain DSM 17343 / BCRC 17206 / CCUG 44338 / CIP 107171 / LMG 19424 / R1) (Ralstonia taiwanensis (strain LMG 19424)) protein is Pyridoxine 5'-phosphate synthase.